A 234-amino-acid chain; its full sequence is Cell adhesion molecule CEACAM15 (234 aa).

The first 32 residues, 1–32 (MGAETMESPSLFLCKGLLLTASLLICWNWSTA), serve as a signal peptide directing secretion. Asn28, Asn75, Asn151, and Asn184 each carry an N-linked (GlcNAc...) asparagine glycan. Residues 146–226 (PYLQLNHTRL…NSFSSKKSYP (81 aa)) form the Ig-like C2-type domain. Cys165 and Cys213 form a disulfide bridge.

It belongs to the immunoglobulin superfamily. CEA family. In terms of tissue distribution, detected in placenta.

This is Cell adhesion molecule CEACAM15 from Mus musculus (Mouse).